The following is a 227-amino-acid chain: Broad specificity amino-acid racemase RacX (227 aa).

51–53 (DRP) lines the substrate pocket. Cys82 serves as the catalytic Proton donor/acceptor. Residues 83–85 (NTA) and Lys161 each bind substrate. The active-site Proton donor/acceptor is the Cys191.

Belongs to the aspartate/glutamate racemases family. In terms of assembly, homodimer.

The catalysed reaction is an L-alpha-amino acid = a D-alpha-amino acid. The enzyme catalyses (2S,6S)-2,6-diaminopimelate = meso-2,6-diaminopimelate. It carries out the reaction L-lysine = D-lysine. It catalyses the reaction L-arginine = D-arginine. The catalysed reaction is L-ornithine = D-ornithine. The enzyme catalyses L-histidine = D-histidine. It carries out the reaction L-alanine = D-alanine. It catalyses the reaction L-tyrosine = D-tyrosine. The catalysed reaction is L-phenylalanine = D-phenylalanine. The enzyme catalyses L-serine = D-serine. It carries out the reaction L-glutamine = D-glutamine. It catalyses the reaction L-methionine = D-methionine. The catalysed reaction is L-asparagine = D-asparagine. The enzyme catalyses L-homoserine = D-homoserine. Functionally, amino-acid racemase able to utilize a broad range of substrates. Preferentially catalyzes the epimerization of LL-diaminopimelate, as well as the racemization of D-lysine, L-arginine, L-ornithine, L-lysine and D-arginine. Has lower activity against D-ornithine, L-histidine, L-alanine, L-tyrosine, L-phenylalanine, L-serine, L-glutamine, L-methionine, L-asparagine and L-homoserine. Has weak activity against L-norleucine, L-aminobutyric acid and L-norvaline. Has no activity toward nine L-amino acids (Thr, Glu, Asp, Val, Leu, Ile, Trp, Cit and Aad). D-amino acids might be used as components of peptidoglycan and/or be involved in peptidoglycan metabolism and remodeling. This Bacillus subtilis (strain 168) protein is Broad specificity amino-acid racemase RacX (racX).